We begin with the raw amino-acid sequence, 252 residues long: MRKKKFLSRFAFGSLFLLCGTILSACTGIQADLRNLIKEATGKDIDLSKSIKTTDGKKNIITSSKKSYEVNPKDTTKLLLEAWKQSFEEGKLGIAELAFDQATNPTKNSDFKMERKVEYFNMEYKSFSDFSVNARLSYIFNWYGSYFGEKSFTANNGGKHNFDLFLSIKSHSKKQFTEKSFIVKDENFQDQDKSQQIITEWIQLDLSLIWSLKGQDELSRKSLDKIFLKDYITYSANEKQINLFTYLQHLIK.

A signal peptide spans 1 to 25 (MRKKKFLSRFAFGSLFLLCGTILSA). Cys26 is lipidated: N-palmitoyl cysteine. Cys26 is lipidated: S-diacylglycerol cysteine.

It belongs to the MG439/MG440 family.

Its subcellular location is the cell membrane. This is an uncharacterized protein from Mycoplasma pneumoniae (strain ATCC 29342 / M129 / Subtype 1) (Mycoplasmoides pneumoniae).